Reading from the N-terminus, the 828-residue chain is Leucine--tRNA ligase (828 aa).

A 'HIGH' region motif is present at residues 36 to 46 (PYPSGKIHIGH). The short motif at 595–599 (KMSKS) is the 'KMSKS' region element. Lys598 is a binding site for ATP.

Belongs to the class-I aminoacyl-tRNA synthetase family.

Its subcellular location is the cytoplasm. It catalyses the reaction tRNA(Leu) + L-leucine + ATP = L-leucyl-tRNA(Leu) + AMP + diphosphate. The chain is Leucine--tRNA ligase from Rickettsia typhi (strain ATCC VR-144 / Wilmington).